The chain runs to 522 residues: Peptide chain release factor 3 (522 aa).

Residues 9–276 enclose the tr-type G domain; it reads KKRRTFAIIS…SFVNLAPAPQ (268 aa). GTP-binding positions include 18–25, 86–90, and 140–143; these read SHPDAGKT, DTPGH, and NKLD.

It belongs to the TRAFAC class translation factor GTPase superfamily. Classic translation factor GTPase family. PrfC subfamily.

The protein localises to the cytoplasm. Increases the formation of ribosomal termination complexes and stimulates activities of RF-1 and RF-2. It binds guanine nucleotides and has strong preference for UGA stop codons. It may interact directly with the ribosome. The stimulation of RF-1 and RF-2 is significantly reduced by GTP and GDP, but not by GMP. This is Peptide chain release factor 3 from Lactobacillus johnsonii (strain CNCM I-12250 / La1 / NCC 533).